A 472-amino-acid polypeptide reads, in one-letter code: UDP-glucuronosyltransferase (472 aa).

3 N-linked (GlcNAc...) asparagine glycosylation sites follow: asparagine 59, asparagine 227, and asparagine 377. The helical transmembrane segment at 436–456 (FGFILLILLTVLWVTLKCCLF) threads the bilayer.

It belongs to the UDP-glycosyltransferase family.

The protein localises to the microsome membrane. The protein resides in the endoplasmic reticulum membrane. It carries out the reaction glucuronate acceptor + UDP-alpha-D-glucuronate = acceptor beta-D-glucuronoside + UDP + H(+). UDPGT is of major importance in the conjugation and subsequent elimination of potentially toxic xenobiotics and endogenous compounds. This chain is UDP-glucuronosyltransferase (ugt3), found in Pleuronectes platessa (European plaice).